The primary structure comprises 150 residues: MTQAVLVLDQRLAARADQADLLLPLTADERSVVRGRRRTDCGREVLLQLPRDGALQPGDQLSDAAGTARVEVTAATEALLRVRATSALALMQAAYHLGNRHVALELHEQDLYLLEDAVLATMLESRGLQLSRCQRPFRPEGGAYAGHQHG.

It belongs to the UreE family.

The protein localises to the cytoplasm. In terms of biological role, involved in urease metallocenter assembly. Binds nickel. Probably functions as a nickel donor during metallocenter assembly. The polypeptide is Urease accessory protein UreE (Parasynechococcus marenigrum (strain WH8102)).